The chain runs to 61 residues: Photosystem II reaction center protein K (61 aa).

Positions 1-24 (MINIVSLVCIYINSVPYSSIFFLD) are excised as a propeptide. A helical transmembrane segment spans residues 36-56 (IVDIMPVIPLFFFLLAFVWQA).

This sequence belongs to the PsbK family. PSII is composed of 1 copy each of membrane proteins PsbA, PsbB, PsbC, PsbD, PsbE, PsbF, PsbH, PsbI, PsbJ, PsbK, PsbL, PsbM, PsbT, PsbX, PsbY, PsbZ, Psb30/Ycf12, at least 3 peripheral proteins of the oxygen-evolving complex and a large number of cofactors. It forms dimeric complexes.

It is found in the plastid. The protein resides in the chloroplast thylakoid membrane. One of the components of the core complex of photosystem II (PSII). PSII is a light-driven water:plastoquinone oxidoreductase that uses light energy to abstract electrons from H(2)O, generating O(2) and a proton gradient subsequently used for ATP formation. It consists of a core antenna complex that captures photons, and an electron transfer chain that converts photonic excitation into a charge separation. The polypeptide is Photosystem II reaction center protein K (Lotus japonicus (Lotus corniculatus var. japonicus)).